The chain runs to 571 residues: Leiomodin-3 (571 aa).

Disordered regions lie at residues 1-29 (MSGH…NLSP), 46-67 (PHLP…GNFN), and 91-228 (PVSF…AKLD). Positions 10–23 (QEDTLSEELDEDEL) are enriched in acidic residues. Positions 94–105 (FVQSEKNTQNQR) are enriched in polar residues. Over residues 119–134 (LKEKLNSEILAKKRES) the composition is skewed to basic and acidic residues. Over residues 142–179 (EAEDDDEDEEEEEEDDEDEEEEEEDEEDDEGEEDEDGE) the composition is skewed to acidic residues. The span at 180–192 (QANREKNDAKEQI) shows a compositional bias: basic and acidic residues. Residues 193-204 (HNNPGTYQQLAT) show a composition bias toward polar residues. The span at 206–228 (TAHEQKDTSETKEKGEKKIAKLD) shows a compositional bias: basic and acidic residues. Positions 397 to 436 (VTNLLTRNQDKRRQKRQEEQQQQQLKEQRKLIAMLENGLG) form a coiled coil. The region spanning 545–564 (PRDQLLNDIRHSNVAYLKPV) is the WH2 domain.

This sequence belongs to the tropomodulin family. May interact with tropomyosin alpha (TPM1/2) N-terminus. Interacts with KLHL40; leading to stabilization. In terms of processing, ubiquitinated, leading to its degradation. Interaction with KLHL40 negatively regulates ubiquitination and degradation. In terms of tissue distribution, skeletal muscle and heart-specific (at protein level).

Its subcellular location is the cytoplasm. The protein localises to the myofibril. The protein resides in the sarcomere. It localises to the a band. It is found in the m line. Its subcellular location is the cytoskeleton. In terms of biological role, essential for the organization of sarcomeric actin thin filaments in skeletal muscle. Increases the rate of actin polymerization. This Mus musculus (Mouse) protein is Leiomodin-3.